The following is a 141-amino-acid chain: Perlwapin-like protein (141 aa).

The signal sequence occupies residues 1–19; that stretch reads MNVYFILFLGVFAFIEVNC. Residues 23 to 71 form the WAP domain; the sequence is KSKSLGTCPKLDVSTVCVVDYKFNCLFQKQCPSGYRCCTYGCNRRCAAV. 6 disulfides stabilise this stretch: cysteine 30/cysteine 60, cysteine 39/cysteine 64, cysteine 47/cysteine 59, cysteine 53/cysteine 68, cysteine 81/cysteine 105, and cysteine 92/cysteine 104.

In terms of tissue distribution, component of the organic matrix of calcified shell layers like nacre and prisms.

The protein localises to the secreted. The protein is Perlwapin-like protein of Mytilus galloprovincialis (Mediterranean mussel).